A 358-amino-acid polypeptide reads, in one-letter code: 3-isopropylmalate dehydrogenase (358 aa).

NAD(+) is bound at residue 77–90; the sequence is GPKWDNLPIDQRPE. Arg98, Arg108, Arg137, and Asp221 together coordinate substrate. Mg(2+) is bound by residues Asp221, Asp245, and Asp249. NAD(+) is bound at residue 279-291; that stretch reads GSAPDIAHLNIAN.

The protein belongs to the isocitrate and isopropylmalate dehydrogenases family. LeuB type 1 subfamily. Homodimer. Requires Mg(2+) as cofactor. It depends on Mn(2+) as a cofactor.

The protein resides in the cytoplasm. The enzyme catalyses (2R,3S)-3-isopropylmalate + NAD(+) = 4-methyl-2-oxopentanoate + CO2 + NADH. It participates in amino-acid biosynthesis; L-leucine biosynthesis; L-leucine from 3-methyl-2-oxobutanoate: step 3/4. In terms of biological role, catalyzes the oxidation of 3-carboxy-2-hydroxy-4-methylpentanoate (3-isopropylmalate) to 3-carboxy-4-methyl-2-oxopentanoate. The product decarboxylates to 4-methyl-2 oxopentanoate. The polypeptide is 3-isopropylmalate dehydrogenase (Campylobacter jejuni (strain RM1221)).